Reading from the N-terminus, the 68-residue chain is MRTSYLLLFILCLVLCDMDSGDTFLTGLGHRSDHYNCVKGGGQCLYSACPIYTKVQGTCYGGKAKCCK.

The signal sequence occupies residues 1 to 21; the sequence is MRTSYLLLFILCLVLCDMDSG. Positions 22–32 are excised as a propeptide; sequence DTFLTGLGHRS. Cystine bridges form between cysteine 37-cysteine 66, cysteine 44-cysteine 59, and cysteine 49-cysteine 67.

This sequence belongs to the beta-defensin family. Monomer. Homodimer.

It localises to the secreted. The protein localises to the membrane. In terms of biological role, has bactericidal activity. May act as a ligand for C-C chemokine receptor CCR6. Positively regulates the sperm motility and bactericidal activity in a CCR6-dependent manner. Binds to CCR6 and triggers Ca2+ mobilization in the sperm which is important for its motility. The polypeptide is Beta-defensin 1 (DEFB1) (Saguinus oedipus (Cotton-top tamarin)).